The chain runs to 791 residues: Cullin-2 (791 aa).

One can recognise a Cullin neddylation domain in the interval 722–784; the sequence is DRKYYMECAI…KMYIQRTDQN (63 aa). Residue Lys736 forms a Glycyl lysine isopeptide (Lys-Gly) (interchain with G-Cter in NEDD8) linkage.

This sequence belongs to the cullin family. Component of multiple CBC (Cul2-ElonginB-ElonginC) E3 ubiquitin-protein ligase complexes formed of cul-2, elb-1, elc-1, rbx-1 and a variable substrate recognition component. Component of the CBC(fem-1) E3 ubiquitin-protein ligase complex with fem-1, fem-2 and fem-3. The CBC(fem-1) complex interacts with tra-1 and promotes tra-1 degradation. Probable component of the CBC(lrr-1) E3 ubiquitin-protein ligase complex incuding cul-2, elb-1, elc-1, rbx-1 and lrr-1. The CBC(lrr-1) complex interacts with the DNA replisome complex at the end of S phase; the interaction promotes the release of components of the CMG helicase complex (a component of the replisome) from chromatin. Probable component of an CBC(zif-1) E3 ubiquitin-protein ligase including cul-2, elc-1, rbx-1 and zif-1. Part of an E3 ubiquitin-protein ligase complex including cul-2, elc-1 and zyg-11. Interacts with Skp1-related protein skr-10. In terms of processing, neddylated; which enhances the ubiquitination activity of CBC (Cul2-ElonginB-ElonginC) E3 ubiquitin-protein ligase complexes. In adults, highly expressed in meiotic cells and oocytes. In larvae, expressed in many proliferating cell types: P cells during the L1 stage; seam cells when they divide at every molt; vulval and somatic gonad cells in late L3 and L4 stages; and intestinal cells throughout larval development.

It is found in the cytoplasm. It localises to the nucleus. It participates in protein modification; protein ubiquitination. Its function is as follows. Core component of multiple cullin-RING-based CBC (Cul2-ElonginB-ElonginC) E3 ubiquitin-protein ligase complexes which mediate the ubiquitination and subsequent proteasomal degradation of target proteins. As a scaffold protein may contribute to catalysis through positioning of the substrate and the ubiquitin-conjugating enzyme. The functional specificity of the CBC complex depends on the variable substrate recognition component. May function in ubiquitin-mediated degradation of CKIs to target cki-1 for degradation. CBC(zif-1) may ensure germline precursor cell asymmetry by targeting germline proteins for destruction if expressed in non-germline cells. As part of the CBC(fem-1) complex directs ubiquitination of tra-1. As part of the CBC(lrr-1) complex, required for the ubiquitination and dissasembly of the CMG helicase complex from chromatin at the end of DNA replication. Positive cell-cycle regulator that is required at two distinct points in the cell cycle; the G1-to-S-phase transition and mitosis. Also required for proper cytoskeletal movement and mitotic chromosome condensation. The polypeptide is Cullin-2 (Caenorhabditis elegans).